We begin with the raw amino-acid sequence, 149 residues long: Calmodulin (149 aa).

An N-acetylalanine modification is found at Ala-2. 4 EF-hand domains span residues 8–43, 44–79, 81–116, and 117–149; these read EQIS…LGQN, PTEA…KMRD, DSEE…LGEK, and LTDN…MLSK. Residues Asp-21, Asp-23, Asp-25, Thr-27, Glu-32, Asp-57, Asp-59, Asn-61, Thr-63, Glu-68, Asp-94, Asp-96, Asn-98, Tyr-100, Glu-105, Asp-130, Asp-132, Asp-134, Gln-136, and Glu-141 each coordinate Ca(2+).

The protein belongs to the calmodulin family. Trimethylation of Lys-116 observed in other calmodulins is absent here.

In terms of biological role, calmodulin mediates the control of a large number of enzymes, ion channels and other proteins by Ca(2+). Among the enzymes to be stimulated by the calmodulin-Ca(2+) complex are a number of protein kinases and phosphatases. This is Calmodulin (CMD1) from Pleurotus cornucopiae (Cornucopia mushroom).